The chain runs to 650 residues: tRNA-dihydrouridine(47) synthase [NAD(P)(+)]-like (650 aa).

Disordered regions lie at residues 1 to 24 (MAEG…GALE) and 46 to 120 (EAKG…NYDK). Alanine 2 is subject to N-acetylalanine. Basic and acidic residues-rich tracts occupy residues 48-58 (KGQEKTCRETE) and 70-79 (PEAKRIRLED). The segment covering 101-113 (KRARGQNKGRPHV) has biased composition (basic residues). 2 consecutive C3H1-type zinc fingers follow at residues 118 to 148 (YDKN…HDVG) and 156 to 186 (ADLG…HLRP). Positions 235 to 284 (FSQGPTPAAAVPEGTAAEGAPRQENCGAQQVPAGPGTSTPPSSPVRTCGP) are disordered. A Phosphoserine modification is found at serine 236. Threonine 273 is subject to Phosphothreonine. Phosphoserine occurs at positions 276 and 277. FMN contacts are provided by residues 311–313 (PLT) and glutamine 365. Cysteine 396 functions as the Proton donor in the catalytic mechanism. A Glycyl lysine isopeptide (Lys-Gly) (interchain with G-Cter in SUMO2) cross-link involves residue lysine 416. FMN is bound by residues lysine 435, histidine 465, 497 to 499 (NGD), and 520 to 521 (AR).

Belongs to the Dus family. Dus3 subfamily. FMN is required as a cofactor.

It catalyses the reaction 5,6-dihydrouridine(47) in tRNA + NAD(+) = uridine(47) in tRNA + NADH + H(+). The enzyme catalyses 5,6-dihydrouridine(47) in tRNA + NADP(+) = uridine(47) in tRNA + NADPH + H(+). The catalysed reaction is a 5,6-dihydrouridine in mRNA + NAD(+) = a uridine in mRNA + NADH + H(+). It carries out the reaction a 5,6-dihydrouridine in mRNA + NADP(+) = a uridine in mRNA + NADPH + H(+). Functionally, catalyzes the synthesis of dihydrouridine, a modified base, in various RNAs, such as tRNAs, mRNAs and some long non-coding RNAs (lncRNAs). Mainly modifies the uridine in position 47 (U47) in the D-loop of most cytoplasmic tRNAs. Also able to mediate the formation of dihydrouridine in some mRNAs, thereby regulating their translation. This chain is tRNA-dihydrouridine(47) synthase [NAD(P)(+)]-like, found in Homo sapiens (Human).